Here is a 127-residue protein sequence, read N- to C-terminus: D-ribose pyranase (127 aa).

His20 serves as the catalytic Proton donor. Substrate is bound by residues Asp28, His94, and Tyr116–Asn118.

Belongs to the RbsD / FucU family. RbsD subfamily. In terms of assembly, homodecamer.

Its subcellular location is the cytoplasm. It catalyses the reaction beta-D-ribopyranose = beta-D-ribofuranose. Its pathway is carbohydrate metabolism; D-ribose degradation; D-ribose 5-phosphate from beta-D-ribopyranose: step 1/2. Functionally, catalyzes the interconversion of beta-pyran and beta-furan forms of D-ribose. In Cutibacterium acnes (strain DSM 16379 / KPA171202) (Propionibacterium acnes), this protein is D-ribose pyranase.